A 423-amino-acid polypeptide reads, in one-letter code: AP-1 complex subunit mu-2 (423 aa).

In terms of domain architecture, MHD spans 168–421; the sequence is KNEVFIDVIE…ITQSGDYQLR (254 aa).

Belongs to the adaptor complexes medium subunit family. Adaptor protein complex 1 (AP-1) is a heterotetramer composed of two large adaptins (gamma-type subunit AP1G1 and beta-type subunit AP1B1), a medium adaptin (mu-type subunit AP1M1 or AP1M2) and a small adaptin (sigma-type subunit AP1S1 or AP1S2 or AP1S3). Interacts with P2X4. In terms of processing, phosphorylation of membrane-bound AP1M1/AP1M2 increases its affinity for sorting signals.

It is found in the golgi apparatus. The protein localises to the cytoplasmic vesicle. Its subcellular location is the clathrin-coated vesicle membrane. In terms of biological role, subunit of clathrin-associated adaptor protein complex 1 that plays a role in protein sorting in the trans-Golgi network (TGN) and endosomes. The AP complexes mediate the recruitment of clathrin to membranes and the recognition of sorting signals within the cytosolic tails of transmembrane cargo molecules. The protein is AP-1 complex subunit mu-2 (Ap1m2) of Rattus norvegicus (Rat).